The following is a 445-amino-acid chain: UNC93-like protein MFSD11 (445 aa).

A helical membrane pass occupies residues 8–28 (LLNIIILGIGFMFMFTAFQTS). An N-linked (GlcNAc...) asparagine glycan is attached at N40. 4 consecutive transmembrane segments (helical) span residues 53–73 (AIIY…VAVI), 74–94 (GCQM…AMFI), 98–118 (TWSF…LWTA), and 138–158 (IFWA…YLAW). N-linked (GlcNAc...) asparagine glycosylation is present at N163. A run of 7 helical transmembrane segments spans residues 170-190 (RTVF…FFLI), 239-259 (MLLL…YSGV), 277-297 (LIGL…GLFG), 309-329 (PVVI…YLYM), 345-365 (AFIN…GLGD), 385-405 (APAF…AFFY), and 415-435 (LLIL…VEWG).

The protein belongs to the unc-93 family.

Its subcellular location is the membrane. The polypeptide is UNC93-like protein MFSD11 (mfsd11) (Xenopus tropicalis (Western clawed frog)).